Reading from the N-terminus, the 326-residue chain is Polyprenal reductase (326 aa).

5 consecutive transmembrane segments (helical) span residues 26–46 (MMFG…TFVE), 84–104 (HFYT…VSTV), 167–187 (INLS…IALL), 212–232 (ILYL…NMIL), and 256–276 (LFNL…FCIA).

This sequence belongs to the steroid 5-alpha reductase family. Polyprenal reductase subfamily.

The protein localises to the endoplasmic reticulum membrane. It carries out the reaction a di-trans,poly-cis-dolichal + NADP(+) = a di-trans,poly-cis-polyprenal + NADPH + H(+). The protein operates within protein modification; protein glycosylation. Its function is as follows. Plays a key role in early steps of protein N-linked glycosylation by being involved in the conversion of polyprenol into dolichol. Acts as a polyprenal reductase that mediates the reduction of polyprenal into dolichal in a NADP-dependent mechanism. Dolichols are required for the synthesis of dolichol-linked monosaccharides and the oligosaccharide precursor used for N-glycosylation. The protein is Polyprenal reductase of Drosophila melanogaster (Fruit fly).